We begin with the raw amino-acid sequence, 643 residues long: Type VI secretion system spike protein VgrG1a (643 aa).

Belongs to the VgrG protein family. Forms homotrimers. Part of the type VI secretion system (T6SS). Interacts with EagT6 and Tse6; these interactions are required for Tse6 loading onto VgrG1. Interacts with Hcp1.

The protein resides in the secreted. Part of the H1 type VI secretion system (H1-T6SS) specialized secretion system, which delivers several virulence factors in both prokaryotic and eukaryotic cells during infection. Forms the spike at the tip of the elongating tube formed by haemolysin co-regulated protein 1/Hcp1. Allows the delivery of the Tse6 toxin to target cells where it exerts its toxicity. The polypeptide is Type VI secretion system spike protein VgrG1a (Pseudomonas aeruginosa (strain ATCC 15692 / DSM 22644 / CIP 104116 / JCM 14847 / LMG 12228 / 1C / PRS 101 / PAO1)).